The sequence spans 393 residues: Na(+)/H(+) antiporter NhaA (393 aa).

11 helical membrane passes run 18 to 38, 65 to 85, 101 to 121, 131 to 151, 160 to 180, 184 to 204, 210 to 230, 260 to 280, 298 to 318, 334 to 354, and 369 to 389; these read AGGVLLALSALVALVISNSPW, MLIWINDLWMAVFFFLVGLEI, MLPAVAALGGMAVPALIYAAI, GWGIPMATDIAFALGLLVLLG, VFLTAVAIIDDLGAILVIAFF, NLSPTMLLAAGLGALVLLGLN, AVGPYVVVGLVIWVCVLKSGI, ALQPWVAFLVLPVFAFANAGV, IAFGLLIGKPIGVFGASWLLI, FFGVCVLCGVGFTMSLFIGSL, and IGVLLGSLLSGAAGVALLLAS.

Belongs to the NhaA Na(+)/H(+) (TC 2.A.33) antiporter family.

It localises to the cell inner membrane. It catalyses the reaction Na(+)(in) + 2 H(+)(out) = Na(+)(out) + 2 H(+)(in). Na(+)/H(+) antiporter that extrudes sodium in exchange for external protons. In Albidiferax ferrireducens (strain ATCC BAA-621 / DSM 15236 / T118) (Rhodoferax ferrireducens), this protein is Na(+)/H(+) antiporter NhaA.